Here is a 194-residue protein sequence, read N- to C-terminus: MSQYTIPHVIERTPAGERSFDIFSRLLNERIVFLGTEIDDGVANVVMAQLLHLQADSSDQEIGLYINSPGGSTTAMLAIYDTMQFLRPTIATYCMGQAASAAAVLLAAGTKGHRHVLAHSRTLLHQPSTQGNGTISDLALQAAEIMRVRSQTEAILSKHTGQTVERLRRDTDRDRIFTAEEAIEYGLADTLVAA.

Ser100 acts as the Nucleophile in catalysis. Residue His125 is part of the active site.

The protein belongs to the peptidase S14 family. In terms of assembly, fourteen ClpP subunits assemble into 2 heptameric rings which stack back to back to give a disk-like structure with a central cavity, resembling the structure of eukaryotic proteasomes.

It localises to the cytoplasm. It carries out the reaction Hydrolysis of proteins to small peptides in the presence of ATP and magnesium. alpha-casein is the usual test substrate. In the absence of ATP, only oligopeptides shorter than five residues are hydrolyzed (such as succinyl-Leu-Tyr-|-NHMec, and Leu-Tyr-Leu-|-Tyr-Trp, in which cleavage of the -Tyr-|-Leu- and -Tyr-|-Trp bonds also occurs).. Its function is as follows. Cleaves peptides in various proteins in a process that requires ATP hydrolysis. Has a chymotrypsin-like activity. Plays a major role in the degradation of misfolded proteins. This chain is ATP-dependent Clp protease proteolytic subunit 4, found in Rhodococcus jostii (strain RHA1).